The primary structure comprises 364 residues: D-alanine--D-alanine ligase (364 aa).

Residues 140–346 form the ATP-grasp domain; it reads KKLALLEGIP…YSQLIDKLIS (207 aa). 173-228 contributes to the ATP binding site; that stretch reads ESEFSYPVFVKPANSGSSVGISKAKDREDLVLAIHEAFLYDTKILIEQAINAREIE. Positions 299, 313, and 315 each coordinate Mg(2+).

This sequence belongs to the D-alanine--D-alanine ligase family. Mg(2+) is required as a cofactor. The cofactor is Mn(2+).

The protein resides in the cytoplasm. It catalyses the reaction 2 D-alanine + ATP = D-alanyl-D-alanine + ADP + phosphate + H(+). It participates in cell wall biogenesis; peptidoglycan biosynthesis. Functionally, cell wall formation. The polypeptide is D-alanine--D-alanine ligase (Caldicellulosiruptor bescii (strain ATCC BAA-1888 / DSM 6725 / KCTC 15123 / Z-1320) (Anaerocellum thermophilum)).